We begin with the raw amino-acid sequence, 622 residues long: Basic helix-loop-helix ARNT-like protein 2 (622 aa).

Residues 1 to 10 (MAEAGVGSAE) are compositionally biased toward low complexity. Disordered regions lie at residues 1–29 (MAEAGVGSAEGAEEERRAVEENFPVDGNS) and 41–86 (PITK…EDEE). Polar residues predominate over residues 45–54 (PATTSFNNSV). Acidic residues predominate over residues 67-76 (DNQDTVEVDG). The segment covering 77–86 (DPQKRNEDEE) has biased composition (basic and acidic residues). The bHLH domain maps to 92 to 145 (DFREAHSQTEKRRRDKMNNLIEELSAMIPQCNPMARKLDKLTVLRMAVQHLKSL). PAS domains lie at 163-235 (KDDE…DVSP) and 342-412 (VPQK…LQNK). Residues 417-460 (TNSYKFRAKDGSFITLKSQWFSFMNPWTKELEYIVSNNTVVLGH) form the PAC domain.

In terms of assembly, component of the circadian core oscillator, which includes the CRY proteins, CLOCK, or NPAS2, BMAL1 or BMAL2, CSNK1D and/or CSNK1E, TIMELESS and the PER proteins. Interacts directly with CLOCK to form the BMAL2-CLOCK transactivator. Can form heterodimers or homodimers which interact directly with CLOCK to form the transcription activator. As to expression, expressed in the pineal gland.

The protein localises to the nucleus. Transcriptional activator which forms a core component of the circadian clock. The circadian clock, an internal time-keeping system, regulates various physiological processes through the generation of approximately 24 hour circadian rhythms in gene expression, which are translated into rhythms in metabolism and behavior. It is derived from the Latin roots 'circa' (about) and 'diem' (day) and acts as an important regulator of a wide array of physiological functions including metabolism, sleep, body temperature, blood pressure, endocrine, immune, cardiovascular, and renal function. Consists of two major components: the central clock, residing in the suprachiasmatic nucleus (SCN) of the brain, and the peripheral clocks that are present in nearly every tissue and organ system. Both the central and peripheral clocks can be reset by environmental cues, also known as Zeitgebers (German for 'timegivers'). The predominant Zeitgeber for the central clock is light, which is sensed by retina and signals directly to the SCN. The central clock entrains the peripheral clocks through neuronal and hormonal signals, body temperature and feeding-related cues, aligning all clocks with the external light/dark cycle. Circadian rhythms allow an organism to achieve temporal homeostasis with its environment at the molecular level by regulating gene expression to create a peak of protein expression once every 24 hours to control when a particular physiological process is most active with respect to the solar day. Transcription and translation of core clock components (CLOCK, NPAS2, BMAL1, BMAL2, PER1, PER2, PER3, CRY1 and CRY2) plays a critical role in rhythm generation, whereas delays imposed by post-translational modifications (PTMs) are important for determining the period (tau) of the rhythms (tau refers to the period of a rhythm and is the length, in time, of one complete cycle). A diurnal rhythm is synchronized with the day/night cycle, while the ultradian and infradian rhythms have a period shorter and longer than 24 hours, respectively. Disruptions in the circadian rhythms contribute to the pathology of cardiovascular diseases, cancer, metabolic syndromes and aging. A transcription/translation feedback loop (TTFL) forms the core of the molecular circadian clock mechanism. Transcription factors, CLOCK or NPAS2 and BMAL1 or BMAL2, form the positive limb of the feedback loop, act in the form of a heterodimer and activate the transcription of core clock genes and clock-controlled genes (involved in key metabolic processes), harboring E-box elements (5'-CACGTG-3') within their promoters. The core clock genes: PER1/2/3 and CRY1/2 which are transcriptional repressors form the negative limb of the feedback loop and interact with the CLOCK|NPAS2-BMAL1|BMAL2 heterodimer inhibiting its activity and thereby negatively regulating their own expression. This heterodimer also activates nuclear receptors NR1D1/2 and RORA/B/G, which form a second feedback loop and which activate and repress BMAL1 transcription, respectively. The preferred binding motif for the CLOCK-BMAL1 heterodimer is 5'-CACGTGA-3', which contains a flanking adenine nucleotide at the 3-prime end of the canonical 6-nucleotide E-box sequence. CLOCK specifically binds to the half-site 5'-CAC-3', while BMAL1 binds to the half-site 5'-GTGA-3'. In Gallus gallus (Chicken), this protein is Basic helix-loop-helix ARNT-like protein 2 (BMAL2).